Reading from the N-terminus, the 87-residue chain is Small ribosomal subunit protein bS20 (87 aa).

Positions 1-25 (MANSAQARKRARQNISHRNRNMSLR) are disordered. Positions 7 to 20 (ARKRARQNISHRNR) are enriched in basic residues.

Belongs to the bacterial ribosomal protein bS20 family.

In terms of biological role, binds directly to 16S ribosomal RNA. The protein is Small ribosomal subunit protein bS20 of Nitrosospira multiformis (strain ATCC 25196 / NCIMB 11849 / C 71).